The chain runs to 353 residues: Thiamine thiazole synthase 1, chloroplastic (353 aa).

Residues 1-48 (MATLTSSICSKPKASVFDPHKSSFHGVPIATQARLSPVKSTPVNLAVT) constitute a chloroplast transit peptide. Substrate is bound by residues Ala-97, 117–118 (EQ), Gly-125, and Ala-190. Cys-219 is subject to 2,3-didehydroalanine (Cys). Substrate contacts are provided by residues Asp-221, His-236, Met-288, and 298-300 (RMG).

It belongs to the THI4 family. Homooctamer. Fe cation serves as cofactor. In terms of processing, during the catalytic reaction, a sulfide is transferred from Cys-219 to a reaction intermediate, generating a dehydroalanine residue.

It localises to the plastid. The protein localises to the chloroplast. It carries out the reaction [ADP-thiazole synthase]-L-cysteine + glycine + NAD(+) = [ADP-thiazole synthase]-dehydroalanine + ADP-5-ethyl-4-methylthiazole-2-carboxylate + nicotinamide + 3 H2O + 2 H(+). Its function is as follows. Involved in biosynthesis of the thiamine precursor thiazole. Catalyzes the conversion of NAD and glycine to adenosine diphosphate 5-(2-hydroxyethyl)-4-methylthiazole-2-carboxylic acid (ADT), an adenylated thiazole intermediate. The reaction includes an iron-dependent sulfide transfer from a conserved cysteine residue of the protein to a thiazole intermediate. The enzyme can only undergo a single turnover, which suggests it is a suicide enzyme. May have additional roles in adaptation to various stress conditions and in DNA damage tolerance. This Vitis vinifera (Grape) protein is Thiamine thiazole synthase 1, chloroplastic.